The following is a 781-amino-acid chain: Translation initiation factor IF-2 (781 aa).

Positions 44–195 (RQLDNAVDGT…TPPKPKELPE (152 aa)) are disordered. Residues 53 to 65 (TNKKAEAPKKETT) show a composition bias toward basic and acidic residues. Positions 66–81 (SNENGNSKGPNKPNMT) are enriched in polar residues. The segment covering 82-93 (NSNEKSNKPNKP) has biased composition (low complexity). Over residues 115 to 126 (KPANTGNQTQAS) the composition is skewed to polar residues. A compositionally biased stretch (low complexity) spans 127 to 169 (GNQQAGGQKRNNNNNSNRPGGGNPNRPGGNNRPNRGGNFNNKG). The tr-type G domain occupies 282 to 451 (ERPPVVTIMG…LLVSEVEELK (170 aa)). The interval 291-298 (GHVDHGKT) is G1. 291–298 (GHVDHGKT) provides a ligand contact to GTP. The segment at 316–320 (GITQH) is G2. A G3 region spans residues 337–340 (DTPG). Residues 337–341 (DTPGH) and 391–394 (NKID) each bind GTP. The tract at residues 391–394 (NKID) is G4. The tract at residues 427–429 (SAK) is G5.

Belongs to the TRAFAC class translation factor GTPase superfamily. Classic translation factor GTPase family. IF-2 subfamily.

It localises to the cytoplasm. In terms of biological role, one of the essential components for the initiation of protein synthesis. Protects formylmethionyl-tRNA from spontaneous hydrolysis and promotes its binding to the 30S ribosomal subunits. Also involved in the hydrolysis of GTP during the formation of the 70S ribosomal complex. This Listeria monocytogenes serotype 4a (strain HCC23) protein is Translation initiation factor IF-2.